The primary structure comprises 268 residues: Putative hydro-lyase PSPTO_5379 (268 aa).

The protein belongs to the D-glutamate cyclase family.

The sequence is that of Putative hydro-lyase PSPTO_5379 from Pseudomonas syringae pv. tomato (strain ATCC BAA-871 / DC3000).